A 95-amino-acid chain; its full sequence is Protein TusB (95 aa).

This sequence belongs to the DsrH/TusB family. Heterohexamer, formed by a dimer of trimers. The hexameric TusBCD complex contains 2 copies each of TusB, TusC and TusD. The TusBCD complex interacts with TusE.

It localises to the cytoplasm. Functionally, part of a sulfur-relay system required for 2-thiolation of 5-methylaminomethyl-2-thiouridine (mnm(5)s(2)U) at tRNA wobble positions. The polypeptide is Protein TusB (Shigella dysenteriae serotype 1 (strain Sd197)).